Here is a 250-residue protein sequence, read N- to C-terminus: Mediator of RNA polymerase II transcription subunit 6 (250 aa).

Positions 166-250 are disordered; it reads KKREEEKKED…EPTARTTSKQ (85 aa). The span at 204 to 223 shows a compositional bias: acidic residues; sequence PAEDALEREEKEEVEEEEEE. Residues 224–239 show a composition bias toward basic and acidic residues; that stretch reads TLKTEEPTTSTDEPKF.

The protein belongs to the Mediator complex subunit 6 family. Component of the Mediator complex. Interacts with let-19/mdt-13. Interacts with RNA polymerase II. Interacts with mdt-28.

It localises to the nucleus. Its function is as follows. Component of the Mediator complex, a coactivator involved in the regulated transcription of nearly all RNA polymerase II-dependent genes. Mediator functions as a bridge to convey information from gene-specific regulatory proteins to the basal RNA polymerase II transcription machinery. Mediator is recruited to promoters by direct interactions with regulatory proteins and serves as a scaffold for the assembly of a functional preinitiation complex with RNA polymerase II and the general transcription factors. Acts to repress beta-catenin target genes. Required for asymmetric division of T-cells and for gonad and germ cell development. In Caenorhabditis elegans, this protein is Mediator of RNA polymerase II transcription subunit 6 (mdt-6).